Reading from the N-terminus, the 857-residue chain is Leucine--tRNA ligase (857 aa).

Positions 42–52 match the 'HIGH' region motif; that stretch reads PYPSGRLHMGH. A 'KMSKS' region motif is present at residues 617–621; the sequence is KMSKS. Lys-620 lines the ATP pocket.

Belongs to the class-I aminoacyl-tRNA synthetase family.

The protein localises to the cytoplasm. It catalyses the reaction tRNA(Leu) + L-leucine + ATP = L-leucyl-tRNA(Leu) + AMP + diphosphate. In Vibrio parahaemolyticus serotype O3:K6 (strain RIMD 2210633), this protein is Leucine--tRNA ligase.